Here is a 277-residue protein sequence, read N- to C-terminus: Shikimate dehydrogenase (NADP(+)) (277 aa).

Residues 15-17 (SLS) and threonine 62 each bind shikimate. Catalysis depends on lysine 66, which acts as the Proton acceptor. Positions 87 and 102 each coordinate shikimate. NADP(+)-binding positions include 127–131 (GAGGA), 151–156 (NRTVDK), and isoleucine 219. Tyrosine 221 lines the shikimate pocket. NADP(+) is bound at residue glycine 242.

It belongs to the shikimate dehydrogenase family. As to quaternary structure, homodimer.

The catalysed reaction is shikimate + NADP(+) = 3-dehydroshikimate + NADPH + H(+). The protein operates within metabolic intermediate biosynthesis; chorismate biosynthesis; chorismate from D-erythrose 4-phosphate and phosphoenolpyruvate: step 4/7. In terms of biological role, involved in the biosynthesis of the chorismate, which leads to the biosynthesis of aromatic amino acids. Catalyzes the reversible NADPH linked reduction of 3-dehydroshikimate (DHSA) to yield shikimate (SA). This Bacillus cereus (strain AH187) protein is Shikimate dehydrogenase (NADP(+)).